The following is a 351-amino-acid chain: Peptide chain release factor 1 (351 aa).

N5-methylglutamine is present on glutamine 229.

Belongs to the prokaryotic/mitochondrial release factor family. Post-translationally, methylated by PrmC. Methylation increases the termination efficiency of RF1.

The protein resides in the cytoplasm. Its function is as follows. Peptide chain release factor 1 directs the termination of translation in response to the peptide chain termination codons UAG and UAA. This is Peptide chain release factor 1 from Ruegeria pomeroyi (strain ATCC 700808 / DSM 15171 / DSS-3) (Silicibacter pomeroyi).